Here is a 57-residue protein sequence, read N- to C-terminus: Ribosome modulation factor 1 (57 aa).

A compositionally biased stretch (basic residues) spans 1–14 (MKRQKRDRQSRAHT). The segment at 1–24 (MKRQKRDRQSRAHTRGYQAGISGR) is disordered.

This sequence belongs to the ribosome modulation factor family.

The protein resides in the cytoplasm. During stationary phase, converts 70S ribosomes to an inactive dimeric form (100S ribosomes). The protein is Ribosome modulation factor 1 of Colwellia psychrerythraea (strain 34H / ATCC BAA-681) (Vibrio psychroerythus).